The primary structure comprises 262 residues: Thiazole synthase (262 aa).

Residue K96 is the Schiff-base intermediate with DXP of the active site. 1-deoxy-D-xylulose 5-phosphate-binding positions include G157, 184 to 185, and 206 to 207; these read AG and NT.

It belongs to the ThiG family. In terms of assembly, homotetramer. Forms heterodimers with either ThiH or ThiS.

It is found in the cytoplasm. The catalysed reaction is [ThiS sulfur-carrier protein]-C-terminal-Gly-aminoethanethioate + 2-iminoacetate + 1-deoxy-D-xylulose 5-phosphate = [ThiS sulfur-carrier protein]-C-terminal Gly-Gly + 2-[(2R,5Z)-2-carboxy-4-methylthiazol-5(2H)-ylidene]ethyl phosphate + 2 H2O + H(+). The protein operates within cofactor biosynthesis; thiamine diphosphate biosynthesis. Catalyzes the rearrangement of 1-deoxy-D-xylulose 5-phosphate (DXP) to produce the thiazole phosphate moiety of thiamine. Sulfur is provided by the thiocarboxylate moiety of the carrier protein ThiS. In vitro, sulfur can be provided by H(2)S. In Legionella pneumophila (strain Paris), this protein is Thiazole synthase.